We begin with the raw amino-acid sequence, 230 residues long: Ureidoacrylate amidohydrolase RutB (230 aa).

Catalysis depends on Asp-24, which acts as the Proton acceptor. Lys-133 is an active-site residue. The Nucleophile role is filled by Cys-166.

The protein belongs to the isochorismatase family. RutB subfamily.

The enzyme catalyses (Z)-3-ureidoacrylate + H2O + H(+) = (Z)-3-aminoacrylate + NH4(+) + CO2. It catalyses the reaction (Z)-3-ureidoacrylate + H2O = (Z)-3-aminoacrylate + carbamate + H(+). The catalysed reaction is (Z)-2-methylureidoacrylate + H2O + H(+) = (Z)-2-methylaminoacrylate + NH4(+) + CO2. Its function is as follows. Hydrolyzes ureidoacrylate to form aminoacrylate and carbamate. The carbamate hydrolyzes spontaneously, thereby releasing one of the nitrogen atoms of the pyrimidine ring as ammonia and one of its carbon atoms as CO2. In Escherichia coli O150:H5 (strain SE15), this protein is Ureidoacrylate amidohydrolase RutB.